The chain runs to 168 residues: Avenin-like a1 (168 aa).

An N-terminal signal peptide occupies residues 1 to 19 (MKTMFLLALLAFTATSAVA).

This sequence belongs to the prolamin family. Post-translationally, contains 7 disulfide bonds.

In terms of biological role, seed storage protein. Not integrated in the gluten polymer through disulfide bonds, unless incorporated by reduction and reoxidation during dough making. Increases dough strength and bread volume, but decreases dough stability when added into a base wheat flour. The protein is Avenin-like a1 (AVNLA) of Triticum aestivum (Wheat).